The chain runs to 311 residues: Probable manganese-dependent inorganic pyrophosphatase (311 aa).

His9, Asp13, Asp15, Asp75, His97, and Asp149 together coordinate Mn(2+).

The protein belongs to the PPase class C family. Requires Mn(2+) as cofactor.

It is found in the cytoplasm. It carries out the reaction diphosphate + H2O = 2 phosphate + H(+). The polypeptide is Probable manganese-dependent inorganic pyrophosphatase (Lactobacillus helveticus (strain DPC 4571)).